Reading from the N-terminus, the 379-residue chain is Dihydroorotate dehydrogenase (quinone) (379 aa).

Residues 79–83 and Ala103 each bind FMN; that span reads AGCDK. Lys83 is a binding site for substrate. 128 to 131 contributes to the substrate binding site; it reads NRLG. FMN contacts are provided by Asn160 and Asn193. Asn193 is a substrate binding site. Ser196 serves as the catalytic Nucleophile. Asn198 lines the substrate pocket. Positions 231 and 259 each coordinate FMN. Substrate is bound at residue 260–261; that stretch reads NT. Residues Gly289, Gly318, and 339-340 each bind FMN; that span reads YT.

This sequence belongs to the dihydroorotate dehydrogenase family. Type 2 subfamily. As to quaternary structure, monomer. FMN is required as a cofactor.

The protein resides in the cell membrane. It carries out the reaction (S)-dihydroorotate + a quinone = orotate + a quinol. The protein operates within pyrimidine metabolism; UMP biosynthesis via de novo pathway; orotate from (S)-dihydroorotate (quinone route): step 1/1. Its function is as follows. Catalyzes the conversion of dihydroorotate to orotate with quinone as electron acceptor. The polypeptide is Dihydroorotate dehydrogenase (quinone) (Crocosphaera subtropica (strain ATCC 51142 / BH68) (Cyanothece sp. (strain ATCC 51142))).